Consider the following 71-residue polypeptide: MFLFPSLLSSFCITLRSISCDLFIFQIEYSFLLPRNKMKNKKLKMKYFYFILINLFSNCDLTHFFQNRNDL.

A signal peptide spans methionine 1 to serine 19.

This is an uncharacterized protein from Pasteurella multocida (strain Pm70).